A 64-amino-acid polypeptide reads, in one-letter code: Drosocin antimicrobial peptides (64 aa).

Positions 1–19 (MKFTIVFLLLACVFAMAVA) are cleaved as a signal peptide. The propeptide occupies 20 to 21 (TP). O-linked (GalNAc...) serine glycosylation occurs at S28. T32 carries O-linked (GalNAc...) threonine glycosylation. Residues 32-40 (TSHPRPIRV) form a critical for inhibition of translation, possibly due to its role in mediating interactions with bacterial 23S rRNA and peptide chain release factors region.

Belongs to the drosocin family. In terms of assembly, associates with the bacterial 50S ribosomal complex, occupying the nascent peptide exit tunnel. Interacts with bacterial 23S rRNA; this interaction is direct. Interacts with bacterial rplV/50S ribosomal protein L22; this interaction is direct. Interacts with bacterial prfA/peptide chain release factor RF1; while associated with the bacterial 50S ribosomal complex, this interaction is direct and traps RF1 on the ribosome, inhibiting further translation. Proteolytically cleaved at a pair of basic residues corresponding to the RXK/RR optimal cleavage site for furin proteases to produce two distinct antibacterial peptides. Post-translationally, O-glycosylated. O-glycosylation may be required for efficient uptake by target bacterial cells. Monosaccharide modification of Thr-32 provides better antibacterial activity than disaccharide modification or no modification. O-glycosylation of Thr-32 is not essential for antimicrobial activity but enhances this activity by mediating interactions with the 23S rRNA and increasing the efficiency of translation inhibition.

The protein resides in the secreted. Functionally, antibacterial peptide with strong anti-Gram-negative bacteria activity. Significantly contributes to antibacterial activity against Enterobacter cloacae but not Providencia burhodogranariea. Inhibitor of bacterial translation machinery that targets translation termination in a prfA- or prfB-dependent manner. Binds within the nascent peptide exit tunnel of the bacterial large ribosomal subunit, potentially interfering with nascent chain translocation that occurs post-peptide bond formation. Binds prfA/RF1 (and potentially prfB/RF2), trapping it on the ribosome after release of the nascent polypeptide chain and preventing further translation. The resulting depletion of peptide chain release factors further disrupts bacterial translation by preventing ribosomal peptide chain release and inducing stop codon readthrough. Entry into target Escherichia coli cells requires the bacterial peptide antibiotic transporter sbmA. Its function is as follows. Peptide with significant antibacterial activity against Providencia burhodogranariea but not Enterobacter cloacae. In Drosophila simulans (Fruit fly), this protein is Drosocin antimicrobial peptides (Dro).